We begin with the raw amino-acid sequence, 162 residues long: Blue copper protein 1b (162 aa).

Residues 1-23 (MASSRVVLILSISMVLLSSVAIA) form the signal peptide. Residues 25-125 (TDYIVGDDKG…QMKLVITVLA (101 aa)) enclose the Phytocyanin domain. His65 is a binding site for Cu cation. Asn71 carries N-linked (GlcNAc...) asparagine glycosylation. Cys78 and Cys112 are joined by a disulfide. Cu cation-binding residues include Cys106, His111, and Met117. The chain crosses the membrane as a helical span at residues 142 to 162 (VVSSLFGVVMAIMVAIAVIFA).

It localises to the membrane. This is Blue copper protein 1b from Medicago truncatula (Barrel medic).